The following is a 35-amino-acid chain: Cupiennin-2a (35 aa).

The residue at position 35 (lysine 35) is a Lysine amide.

In terms of tissue distribution, expressed by the venom gland.

The protein localises to the secreted. This is Cupiennin-2a from Cupiennius salei (American wandering spider).